Here is an 87-residue protein sequence, read N- to C-terminus: Large ribosomal subunit protein bL27 (87 aa).

The tract at residues 1 to 24 is disordered; the sequence is MATKKAGGSSRNGRDSAGRRLGVK.

This sequence belongs to the bacterial ribosomal protein bL27 family.

The protein is Large ribosomal subunit protein bL27 of Rickettsia massiliae (strain Mtu5).